Here is a 242-residue protein sequence, read N- to C-terminus: MTDQREEPQGSNDHLVRSSDPEHPANLIPELCKKFYTLGWVTGTGGGTSIRRDGHIFIAPSGVQKEMIKPEDIFVLSYPTPKYPPSARQYIRKPQELKPSACTPLFLAAFDRGAGCSIHTHSQWAVLVTLLVEREKGKNGCFEINNIEQIKGIPKGKGKGMLGFFDTLRIPIIENTAFEEDLTESLEKAMDEYPDTYAVLVRRHGIYVWGDTVAKAKTQCESLDYLFQLAVEMHKLGLPWVQ.

A disordered region spans residues 1 to 23 (MTDQREEPQGSNDHLVRSSDPEH). Cysteine 102 contributes to the substrate binding site. Zn(2+) is bound by residues histidine 119 and histidine 121. Residue glutamate 148 is the Proton donor/acceptor of the active site. Histidine 204 contributes to the Zn(2+) binding site.

The protein belongs to the aldolase class II family. MtnB subfamily. Zn(2+) is required as a cofactor.

The protein localises to the cytoplasm. The enzyme catalyses 5-(methylsulfanyl)-D-ribulose 1-phosphate = 5-methylsulfanyl-2,3-dioxopentyl phosphate + H2O. It functions in the pathway amino-acid biosynthesis; L-methionine biosynthesis via salvage pathway; L-methionine from S-methyl-5-thio-alpha-D-ribose 1-phosphate: step 2/6. Functionally, catalyzes the dehydration of methylthioribulose-1-phosphate (MTRu-1-P) into 2,3-diketo-5-methylthiopentyl-1-phosphate (DK-MTP-1-P). The chain is Methylthioribulose-1-phosphate dehydratase from Uncinocarpus reesii (strain UAMH 1704).